Reading from the N-terminus, the 495-residue chain is Putative lon protease homolog (495 aa).

52 to 59 (GPPGVGKS) is a binding site for ATP. The segment at 471–495 (YSSETTGSQRDSTYNYANMDDRSYE) is disordered. A compositionally biased stretch (polar residues) spans 472-486 (SSETTGSQRDSTYNY).

The protein belongs to the peptidase S16 family.

This is Putative lon protease homolog from Thermoplasma volcanium (strain ATCC 51530 / DSM 4299 / JCM 9571 / NBRC 15438 / GSS1).